The sequence spans 403 residues: MISSLRGMNDILSEDYERFTHFITVATKIAQRYGFHFIETPLLEETALFKRSVGESSDIVGKEMYQFVDKGENDVCLRPEGTAGVVRAFVQKKLDRAGGIHRFFYHGAMFRYERPQKGRLRQFHQFGVESFGESSVYEDASMIMMASDILKELGIGYRLQLNSLGCNECMPPYREKLINFVTKHKDEICEDCTRRVETNPIRVLDCKNEKCQSIYTEAPKLLNCLCSTCESDFTTLKMILKQNEIDFEIDTNLVRGLDYYSKTAFEFVSDNIGSQSAIAGGGRYDRLVEFLDGRPTPAVGFAMGIERLMELIIMPEAKKDGYYLGAMDDEALDMIVKIAQKKRKSDIVILEYKTKNLKNHLKAADKSNAKYCAVIGSNEIKDGTIWVKNLEDKTEKTILSELF.

Belongs to the class-II aminoacyl-tRNA synthetase family. As to quaternary structure, homodimer.

It is found in the cytoplasm. The catalysed reaction is tRNA(His) + L-histidine + ATP = L-histidyl-tRNA(His) + AMP + diphosphate + H(+). In Sulfurimonas denitrificans (strain ATCC 33889 / DSM 1251) (Thiomicrospira denitrificans (strain ATCC 33889 / DSM 1251)), this protein is Histidine--tRNA ligase.